The sequence spans 286 residues: Thymidylate synthase (286 aa).

Residue Arg27 coordinates dUMP. His57 is a (6R)-5,10-methylene-5,6,7,8-tetrahydrofolate binding site. Residue 148-149 (RR) coordinates dUMP. Cys168 acts as the Nucleophile in catalysis. Residues 188 to 191 (RSAD), Asn199, and 229 to 231 (HLY) contribute to the dUMP site. Asp191 lines the (6R)-5,10-methylene-5,6,7,8-tetrahydrofolate pocket. Ala285 serves as a coordination point for (6R)-5,10-methylene-5,6,7,8-tetrahydrofolate.

This sequence belongs to the thymidylate synthase family. Bacterial-type ThyA subfamily. In terms of assembly, homodimer.

Its subcellular location is the cytoplasm. It carries out the reaction dUMP + (6R)-5,10-methylene-5,6,7,8-tetrahydrofolate = 7,8-dihydrofolate + dTMP. The protein operates within pyrimidine metabolism; dTTP biosynthesis. Catalyzes the reductive methylation of 2'-deoxyuridine-5'-monophosphate (dUMP) to 2'-deoxythymidine-5'-monophosphate (dTMP) while utilizing 5,10-methylenetetrahydrofolate (mTHF) as the methyl donor and reductant in the reaction, yielding dihydrofolate (DHF) as a by-product. This enzymatic reaction provides an intracellular de novo source of dTMP, an essential precursor for DNA biosynthesis. This Psychrobacter sp. (strain PRwf-1) protein is Thymidylate synthase.